Here is a 635-residue protein sequence, read N- to C-terminus: DNA mismatch repair protein MutL (635 aa).

Residues 359 to 399 (GTNKYAQPEAAKSSAAEQAVARERSSARERAAPAYKEDHPY) are disordered. Residues 364–377 (AQPEAAKSSAAEQA) show a composition bias toward low complexity. The segment covering 378 to 399 (VARERSSARERAAPAYKEDHPY) has biased composition (basic and acidic residues).

The protein belongs to the DNA mismatch repair MutL/HexB family.

Functionally, this protein is involved in the repair of mismatches in DNA. It is required for dam-dependent methyl-directed DNA mismatch repair. May act as a 'molecular matchmaker', a protein that promotes the formation of a stable complex between two or more DNA-binding proteins in an ATP-dependent manner without itself being part of a final effector complex. This chain is DNA mismatch repair protein MutL, found in Yersinia pseudotuberculosis serotype O:1b (strain IP 31758).